The chain runs to 435 residues: D-amino acid dehydrogenase (435 aa).

3–17 lines the FAD pocket; the sequence is VLILGSGVIGTTSAW.

The protein belongs to the DadA oxidoreductase family. The cofactor is FAD.

It carries out the reaction a D-alpha-amino acid + A + H2O = a 2-oxocarboxylate + AH2 + NH4(+). The protein operates within amino-acid degradation; D-alanine degradation; NH(3) and pyruvate from D-alanine: step 1/1. In terms of biological role, oxidative deamination of D-amino acids. This chain is D-amino acid dehydrogenase, found in Xylella fastidiosa (strain M12).